Consider the following 724-residue polypeptide: Catalase-peroxidase (724 aa).

The tryptophyl-tyrosyl-methioninium (Trp-Tyr) (with M-252) cross-link spans 98–226 (WHAAGSYRTA…LAAVQMGLIY (129 aa)). The active-site Proton acceptor is the H99. The tryptophyl-tyrosyl-methioninium (Tyr-Met) (with W-98) cross-link spans 226–252 (YVNPQGVNGEPDPLRTALHVRETFARM). H267 is a heme b binding site.

The protein belongs to the peroxidase family. Peroxidase/catalase subfamily. Homodimer or homotetramer. The cofactor is heme b. In terms of processing, formation of the three residue Trp-Tyr-Met cross-link is important for the catalase, but not the peroxidase activity of the enzyme.

The enzyme catalyses H2O2 + AH2 = A + 2 H2O. It catalyses the reaction 2 H2O2 = O2 + 2 H2O. In terms of biological role, bifunctional enzyme with both catalase and broad-spectrum peroxidase activity. The chain is Catalase-peroxidase from Cereibacter sphaeroides (strain ATCC 17025 / ATH 2.4.3) (Rhodobacter sphaeroides).